Reading from the N-terminus, the 415-residue chain is 2-oxoadipate dioxygenase/decarboxylase (415 aa).

H66, R70, and H225 together coordinate 2-oxoadipate. H66 lines the Fe(2+) pocket. Residues H225 and E296 each coordinate Fe(2+). Residue A361 participates in 2-oxoadipate binding.

This sequence belongs to the 2-oxoadipate dioxygenase/decarboxylase family. Requires Fe(2+) as cofactor.

It carries out the reaction 2-oxoadipate + O2 = (R)-2-hydroxyglutarate + CO2. Functionally, catalyzes the decarboxylation and hydroxylation of 2-oxoadipate (2OA) to form D-2-hydroxyglutarate (D-2-HGA). The protein is 2-oxoadipate dioxygenase/decarboxylase of Mycobacterium bovis (strain ATCC BAA-935 / AF2122/97).